A 576-amino-acid polypeptide reads, in one-letter code: MSLSPSRIRLLDSVTVNQISAGEVIENAASVVKELIENSLDAGADEIHIETLGGGRGQIVVRDNGVGMDPEEVPVALQRHATSKIAHFADIFSLASYGFRGEALPSIASISKMEIHTARAGGLGSKTLIEKGEPVCCEPAPRQQGTTIAVHSLFYNVPMRQSFQKSPQMDRLAIRRLLENSVLSSEGIGWTWISECRQELYVAKKQGFIERVALVLGESFVQEAFFIDKQQGDLRVLGFLGSPNQHRSTRQGQRLFINNRAVESSFISKKVAEAYAWMIPAQRYPIFVLKLFLPPMWCDFNVHPQKTEVRLLQEGQISNLLVEAISEALLRRSPSLEETVLKVPTEKIPIENEGISVPSIRPAIVSAPLSCPTFSQQPYLKTEMATIVSRDSASSSLSVVEKVRFLTSLGKVLLVEDSEGVHVVFVQAARKHLFYVSLLSERLESRLACQTFLLPSSVQMTKLEADFLQMRLEALTALGIELSRISPDSFAIESAPPFIQEEELKEWIVALAQEGALHVGESFEQLVENTVQKLVFSRNARAFDYAWLDILWKLGKPEKAFDGEMIRRLVLDDDFM.

The protein belongs to the DNA mismatch repair MutL/HexB family.

Its function is as follows. This protein is involved in the repair of mismatches in DNA. It is required for dam-dependent methyl-directed DNA mismatch repair. May act as a 'molecular matchmaker', a protein that promotes the formation of a stable complex between two or more DNA-binding proteins in an ATP-dependent manner without itself being part of a final effector complex. The chain is DNA mismatch repair protein MutL from Chlamydia trachomatis serovar A (strain ATCC VR-571B / DSM 19440 / HAR-13).